The following is a 1906-amino-acid chain: Zinc metalloprotease ZmpB (1906 aa).

The first 33 residues, 1–33 (MFKKDRFSIRKIKGVVGSVFLGSLLMAPSVVDA), serve as a signal peptide directing secretion. A propeptide spanning residues 34–76 (ATYHYVNKEIISQEAKDLIQTGKPDRNEVVYGLVYQKDQLPQT) is cleaved from the precursor. The LPXTG sorting signal motif lies at 73 to 77 (LPQTG). Thr76 carries the post-translational modification Pentaglycyl murein peptidoglycan amidated threonine. 2 helical membrane passes run 77–98 (GTEASVLTAFGLLTVGSLLLIY) and 105–127 (SVFLVGAMGLVVLPSAGAVDPVA). At 128–1906 (TLALASREGV…TNSFKTSIFK (1779 aa)) the chain is on the extracellular side. A disordered region spans residues 178 to 436 (VETPQSITNQ…KASSVSPTDY (259 aa)). Residues 181–196 (PQSITNQEQARTENQV) show a composition bias toward polar residues. Composition is skewed to basic and acidic residues over residues 201-239 (EAPKEEAPKTEESPKEEPKSEVKPTDDTLPKVEEGKEDS), 252-262 (VESKPEEKVAV), 271-335 (KPAE…KEET), 352-375 (KQTEPTEEPKVEQAGEPVAPREDE), and 383-408 (EPEKQPEVPEEEKAVEETPKPEDKIK). A run of 4 repeats spans residues 277–291 (KVEQAGEPVAPREDE), 293–315 (APVEPEKQPEAPEEEKAVEETPK), 361–375 (KVEQAGEPVAPREDE), and 380–402 (APVEPEKQPEVPEEEKAVEETPK). Positions 277–375 (KVEQAGEPVA…GEPVAPREDE (99 aa)) are 2 X 15 AA repeats of K-V-E-Q-A-G-E-P-V-A-P-R-E-D-E. Residues 293-375 (APVEPEKQPE…GEPVAPREDE (83 aa)) are 2 X 23 AA approximate repeats. The segment covering 421 to 436 (LNNQIDKASSVSPTDY) has biased composition (polar residues). His1562 provides a ligand contact to Zn(2+). Glu1563 is an active-site residue. Zn(2+) contacts are provided by His1566 and Glu1586.

Belongs to the peptidase M26 family. Requires Zn(2+) as cofactor. The Gram-positive cell-wall anchor motif LPXTG is located in the N-terminal part, in contrast to such motifs in other known streptococcal and staphylococcal proteins. The protease could be cleaved by the sortase and anchored in the membrane via the two potential N-terminal transmembrane domains, whereas the propeptide located prior to the LPXTG motif would remain attached to the cell wall peptidoglycan by an amide bond.

It is found in the secreted. The protein resides in the cell wall. It localises to the membrane. Is a virulence factor capable of inducing inflammation in the lower respiratory tract, by increasing tumor necrosis factor alpha (TNF-alpha) concentration in the lungs. Also appears to have other functions important in virulence in models of pneumonia and septicemia. The polypeptide is Zinc metalloprotease ZmpB (zmpB) (Streptococcus pneumoniae serotype 4 (strain ATCC BAA-334 / TIGR4)).